A 332-amino-acid chain; its full sequence is Packaging enzyme P4 (332 aa).

An involved in the regulation and mechanisms of transcription, replication and genome packaging region spans residues 111–138 (RWPSEGIYSGVTALMGATGSGKSITLNE). 126 to 133 (GATGSGKS) contacts ATP. The disordered stretch occupies residues 310-332 (LERGSVDTDDRNSAPRRGANFSL). The span at 313 to 322 (GSVDTDDRNS) shows a compositional bias: basic and acidic residues.

In terms of assembly, homohexamer. Part of the packaging complex composed of RDRP, P4 and P7.

The protein localises to the virion. It catalyses the reaction a ribonucleoside 5'-triphosphate + H2O = a ribonucleoside 5'-diphosphate + phosphate + H(+). In terms of biological role, packaging motor with helicase and translocase activities. Part of the packaging complex that packages the viral RNA segments, replicate them into a double-stranded form and transcribe them. is one of the structural proteins of the polyhedral procapsid, which is responsible for genomic replication and transcription. Displays single-stranded RNA-stimulated NTPase activity. The protein is Packaging enzyme P4 (P4) of Pseudomonas savastanoi pv. phaseolicola (Pseudomonas syringae pv. phaseolicola).